The primary structure comprises 167 residues: Peptide deformylase (167 aa).

Fe cation contacts are provided by cysteine 91 and histidine 133. Residue glutamate 134 is part of the active site. Fe cation is bound at residue histidine 137.

This sequence belongs to the polypeptide deformylase family. Fe(2+) is required as a cofactor.

It catalyses the reaction N-terminal N-formyl-L-methionyl-[peptide] + H2O = N-terminal L-methionyl-[peptide] + formate. Its function is as follows. Removes the formyl group from the N-terminal Met of newly synthesized proteins. Requires at least a dipeptide for an efficient rate of reaction. N-terminal L-methionine is a prerequisite for activity but the enzyme has broad specificity at other positions. The protein is Peptide deformylase of Nitrosococcus oceani (strain ATCC 19707 / BCRC 17464 / JCM 30415 / NCIMB 11848 / C-107).